The following is a 341-amino-acid chain: Anthranilate phosphoribosyltransferase (341 aa).

Residues glycine 81, 84–85 (GD), 91–94 (NVST), 109–117 (KHGNRSVSS), and serine 121 each bind 5-phospho-alpha-D-ribose 1-diphosphate. Glycine 81 lines the anthranilate pocket. Residue serine 93 participates in Mg(2+) binding. Anthranilate is bound at residue asparagine 112. Arginine 167 is an anthranilate binding site. Residues aspartate 226 and glutamate 227 each coordinate Mg(2+).

This sequence belongs to the anthranilate phosphoribosyltransferase family. As to quaternary structure, homodimer. Requires Mg(2+) as cofactor.

It catalyses the reaction N-(5-phospho-beta-D-ribosyl)anthranilate + diphosphate = 5-phospho-alpha-D-ribose 1-diphosphate + anthranilate. It participates in amino-acid biosynthesis; L-tryptophan biosynthesis; L-tryptophan from chorismate: step 2/5. In terms of biological role, catalyzes the transfer of the phosphoribosyl group of 5-phosphorylribose-1-pyrophosphate (PRPP) to anthranilate to yield N-(5'-phosphoribosyl)-anthranilate (PRA). This Saccharophagus degradans (strain 2-40 / ATCC 43961 / DSM 17024) protein is Anthranilate phosphoribosyltransferase.